Reading from the N-terminus, the 194-residue chain is Imidazoleglycerol-phosphate dehydratase (194 aa).

The protein belongs to the imidazoleglycerol-phosphate dehydratase family.

It localises to the cytoplasm. The catalysed reaction is D-erythro-1-(imidazol-4-yl)glycerol 3-phosphate = 3-(imidazol-4-yl)-2-oxopropyl phosphate + H2O. It participates in amino-acid biosynthesis; L-histidine biosynthesis; L-histidine from 5-phospho-alpha-D-ribose 1-diphosphate: step 6/9. The protein is Imidazoleglycerol-phosphate dehydratase of Caldicellulosiruptor bescii (strain ATCC BAA-1888 / DSM 6725 / KCTC 15123 / Z-1320) (Anaerocellum thermophilum).